Here is a 152-residue protein sequence, read N- to C-terminus: Biotin carboxyl carrier protein of acetyl-CoA carboxylase (152 aa).

The Biotinyl-binding domain occupies 72-148 (IIDILSPISG…TKNQVLMKII (77 aa)). Lys114 is subject to N6-biotinyllysine.

It localises to the plastid. Its subcellular location is the chloroplast. It functions in the pathway lipid metabolism; fatty acid biosynthesis. Functionally, this protein is a component of the acetyl coenzyme A carboxylase complex; first, biotin carboxylase catalyzes the carboxylation of the carrier protein and then the transcarboxylase transfers the carboxyl group to form malonyl-CoA. In Cyanidium caldarium (Red alga), this protein is Biotin carboxyl carrier protein of acetyl-CoA carboxylase (accB).